Consider the following 445-residue polypeptide: Chromosomal replication initiator protein DnaA (445 aa).

Positions 1 to 73 (MSTHLTETWE…VNALKLLTSK (73 aa)) are domain I, interacts with DnaA modulators. Residues 73–106 (KKYNIDFIVTTEEKIEKNHNNEKSNIVVNDEMST) are domain II. The segment at 107–323 (MLNPKYTFDS…GALIRIVAFS (217 aa)) is domain III, AAA+ region. Positions 151, 153, 154, and 155 each coordinate ATP. The segment at 324 to 445 (SLTNKEISVD…NDLNKRINQK (122 aa)) is domain IV, binds dsDNA.

This sequence belongs to the DnaA family. As to quaternary structure, oligomerizes as a right-handed, spiral filament on DNA at oriC.

The protein resides in the cytoplasm. Functionally, plays an essential role in the initiation and regulation of chromosomal replication. ATP-DnaA binds to the origin of replication (oriC) to initiate formation of the DNA replication initiation complex once per cell cycle. Binds the DnaA box (a 9 base pair repeat at the origin) and separates the double-stranded (ds)DNA. Forms a right-handed helical filament on oriC DNA; dsDNA binds to the exterior of the filament while single-stranded (ss)DNA is stabiized in the filament's interior. The ATP-DnaA-oriC complex binds and stabilizes one strand of the AT-rich DNA unwinding element (DUE), permitting loading of DNA polymerase. After initiation quickly degrades to an ADP-DnaA complex that is not apt for DNA replication. Binds acidic phospholipids. The protein is Chromosomal replication initiator protein DnaA of Clostridium botulinum (strain Loch Maree / Type A3).